We begin with the raw amino-acid sequence, 955 residues long: Thyroid hormone receptor-associated protein 3 (955 aa).

The interval 1-94 is disordered; the sequence is MSKTNKSKSG…YFRGRNRGFY (94 aa). An N-acetylserine modification is found at Ser-2. Residues 2–190 are required for mRNA splicing activation; sequence SKTNKSKSGS…KSSSKDSRPS (189 aa). Over residues 14–51 the composition is skewed to basic residues; it reads SRSRSASRSRSRSFSKSRSRSRSLSRSRKRRLSSRSRS. A Dimethylated arginine modification is found at Arg-17. Basic and acidic residues predominate over residues 58-75; that stretch reads HNRERNHPRVYQNRDFRG. Arg-66 bears the Asymmetric dimethylarginine mark. Residues 82–94 show a composition bias toward low complexity; the sequence is RPYYFRGRNRGFY. 2 positions are modified to asymmetric dimethylarginine: Arg-101 and Arg-108. The disordered stretch occupies residues 117–559; that stretch reads AYSPRRGRSR…AKGDFPTGKS (443 aa). Over residues 121 to 143 the composition is skewed to basic residues; it reads RRGRSRSRSPKRRSPSPRSRSHS. The segment covering 144 to 155 has biased composition (basic and acidic residues); it reads RNSDKSSSDRSR. A compositionally biased stretch (low complexity) spans 157 to 166; the sequence is SSSSRSSSNH. Residues 167–188 are compositionally biased toward basic and acidic residues; sequence SRVESSKRKSAKEKKSSSKDSR. Lys-202 is covalently cross-linked (Glycyl lysine isopeptide (Lys-Gly) (interchain with G-Cter in SUMO1); alternate). Lys-202 is covalently cross-linked (Glycyl lysine isopeptide (Lys-Gly) (interchain with G-Cter in SUMO2); alternate). The segment covering 204-220 has biased composition (polar residues); that stretch reads QTFSGGTSQDTKASESS. A Glycyl lysine isopeptide (Lys-Gly) (interchain with G-Cter in SUMO2) cross-link involves residue Lys-215. At Ser-220 the chain carries Phosphoserine. Residue Lys-221 forms a Glycyl lysine isopeptide (Lys-Gly) (interchain with G-Cter in SUMO2); alternate linkage. Position 221 is an N6-acetyllysine; alternate (Lys-221). Residues Ser-232, Ser-237, Ser-240, Ser-243, and Ser-248 each carry the phosphoserine modification. Lys-252 participates in a covalent cross-link: Glycyl lysine isopeptide (Lys-Gly) (interchain with G-Cter in SUMO2); alternate. Lys-252 is subject to N6-methyllysine; alternate. Ser-253 and Ser-257 each carry phosphoserine. The segment covering 266 to 276 has biased composition (pro residues); it reads RPSPVPKPSPP. Over residues 282–300 the composition is skewed to polar residues; the sequence is QMGSTLPSGAGYQSGTHQG. Residues 305-331 show a composition bias toward low complexity; that stretch reads GSGSLSPSKKSPVGKSPPSTGSTYGSS. Ser-315, Ser-320, and Ser-323 each carry phosphoserine. A Phosphothreonine modification is found at Thr-324. Position 326 is a phosphoserine (Ser-326). The residue at position 328 (Tyr-328) is a Phosphotyrosine. Lys-333 participates in a covalent cross-link: Glycyl lysine isopeptide (Lys-Gly) (interchain with G-Cter in SUMO2). Ser-339 is subject to Phosphoserine. Residue Lys-346 forms a Glycyl lysine isopeptide (Lys-Gly) (interchain with G-Cter in SUMO2); alternate linkage. Lys-346 carries the N6-acetyllysine; alternate modification. Residues 347-377 are compositionally biased toward basic and acidic residues; that stretch reads RYLEEQKTENGKDKEQKQTNTDKEKIKEKGS. Glycyl lysine isopeptide (Lys-Gly) (interchain with G-Cter in SUMO2) cross-links involve residues Lys-353 and Lys-375. The interval 359–955 is required for mRNA decay activity; the sequence is DKEQKQTNTD…EKDNIQPTTE (597 aa). Ser-377 and Ser-379 each carry phosphoserine. A Glycyl lysine isopeptide (Lys-Gly) (interchain with G-Cter in SUMO1); alternate cross-link involves residue Lys-387. A Glycyl lysine isopeptide (Lys-Gly) (interchain with G-Cter in SUMO2); alternate cross-link involves residue Lys-387. Residues Lys-389 and Lys-396 each participate in a glycyl lysine isopeptide (Lys-Gly) (interchain with G-Cter in SUMO2) cross-link. Position 397 is a phosphothreonine (Thr-397). Residue Lys-401 forms a Glycyl lysine isopeptide (Lys-Gly) (interchain with G-Cter in SUMO2) linkage. Ser-406 and Ser-408 each carry phosphoserine. Basic and acidic residues predominate over residues 414–452; sequence LRDDFEKKMADFHKEEMDDQDKDKAKGRKESEFDDEPKF. Glycyl lysine isopeptide (Lys-Gly) (interchain with G-Cter in SUMO2) cross-links involve residues Lys-421 and Lys-427. Ser-444 carries the post-translational modification Phosphoserine. A Glycyl lysine isopeptide (Lys-Gly) (interchain with G-Cter in SUMO1); alternate cross-link involves residue Lys-451. Residues Lys-451 and Lys-455 each participate in a glycyl lysine isopeptide (Lys-Gly) (interchain with G-Cter in SUMO2); alternate cross-link. Lys-455 carries the N6-acetyllysine; alternate modification. Glycyl lysine isopeptide (Lys-Gly) (interchain with G-Cter in SUMO2) cross-links involve residues Lys-461 and Lys-467. At Ser-468 the chain carries Phosphoserine. Residues Lys-470 and Lys-481 each participate in a glycyl lysine isopeptide (Lys-Gly) (interchain with G-Cter in SUMO2); alternate cross-link. 2 positions are modified to N6-acetyllysine; alternate: Lys-470 and Lys-481. Lys-486 participates in a covalent cross-link: Glycyl lysine isopeptide (Lys-Gly) (interchain with G-Cter in SUMO2). The span at 495–521 shows a compositional bias: basic and acidic residues; it reads FPERSKKEDRGKRSEGGHRGFVPEKNF. Lys-519 is subject to N6-acetyllysine. Residue Lys-527 forms a Glycyl lysine isopeptide (Lys-Gly) (interchain with G-Cter in SUMO2); alternate linkage. Lys-527 bears the N6-acetyllysine; alternate mark. Ser-535 carries the phosphoserine modification. The segment covering 540–550 has biased composition (basic and acidic residues); sequence KTSESRDKLGA. Lys-551 is covalently cross-linked (Glycyl lysine isopeptide (Lys-Gly) (interchain with G-Cter in SUMO2)). ATP is bound at residue 552–559; the sequence is GDFPTGKS. Lys-558 participates in a covalent cross-link: Glycyl lysine isopeptide (Lys-Gly) (interchain with G-Cter in SUMO2); alternate. Position 558 is an N6-acetyllysine; alternate (Lys-558). Phosphoserine occurs at positions 560, 562, and 575. Residue Lys-602 forms a Glycyl lysine isopeptide (Lys-Gly) (interchain with G-Cter in SUMO2) linkage. 5 positions are modified to phosphoserine: Ser-619, Ser-622, Ser-672, Ser-682, and Ser-684. Basic and acidic residues predominate over residues 663 to 680; the sequence is EQEAAKNKKSPEIHRRID. A disordered region spans residues 663 to 955; sequence EQEAAKNKKS…EKDNIQPTTE (293 aa). Positions 691 to 761 are enriched in basic and acidic residues; it reads LAHDEMKSPR…RSAEKTEKTH (71 aa). Lys-697 is covalently cross-linked (Glycyl lysine isopeptide (Lys-Gly) (interchain with G-Cter in SUMO2)). The residue at position 698 (Ser-698) is a Phosphoserine. Residues Lys-705, Lys-709, Lys-711, Lys-756, and Lys-759 each participate in a glycyl lysine isopeptide (Lys-Gly) (interchain with G-Cter in SUMO2) cross-link. Residues 762–775 are compositionally biased toward basic residues; the sequence is KGSKKQKKHRRARD. Low complexity predominate over residues 779-789; sequence SSSSSSQSSHS. An N6-acetyllysine modification is found at Lys-811. Asymmetric dimethylarginine is present on Arg-845. The span at 848–859 shows a compositional bias: low complexity; sequence YSGNNNNNSNND. Thr-874 is subject to Phosphothreonine. Glycyl lysine isopeptide (Lys-Gly) (interchain with G-Cter in SUMO2) cross-links involve residues Lys-876 and Lys-879. Residues 881–895 are compositionally biased toward basic and acidic residues; the sequence is YLHDDREGEGSDKWV. Ser-928 and Ser-939 each carry phosphoserine. The segment covering 930–940 has biased composition (acidic residues); the sequence is EEGEIEDDESG.

This sequence belongs to the BCLAF1/THRAP3 family. In terms of assembly, associated with the large multiprotein complex TRAP (Mediator complex-like). Interacts with SFPQ; the interaction is dependent on SFPQ phosphorylation at 'Thr-687' and inhibits binding of SFPQ to an ESS1 exonic splicing silencer element-containing RNA. Interacts with NXF1. Component of the SNARP complex which consists at least of SNIP1, SNW1, THRAP3, BCLAF1 and PNN. Associated with spliced mRNP complexes. Interacts with HELZ2 and PPARG. Interacts with CLOCK and BMAL1. Component of a MACOM-like complex, named WTAP complex, composed of WTAP, ZC3H13, CBLL1, KIAA1429, RBM15, BCLAF1 and THRAP3. Post-translationally, ADP-ribosylation during genotoxic stress promotes accumulation in nuclear speckles. In terms of tissue distribution, ubiquitous.

The protein resides in the nucleus. The protein localises to the nucleoplasm. It localises to the nucleus speckle. Functionally, involved in pre-mRNA splicing. Remains associated with spliced mRNA after splicing which probably involves interactions with the exon junction complex (EJC). Can trigger mRNA decay which seems to be independent of nonsense-mediated decay involving premature stop codons (PTC) recognition. May be involved in nuclear mRNA decay. Involved in regulation of signal-induced alternative splicing. During splicing of PTPRC/CD45 is proposed to sequester phosphorylated SFPQ from PTPRC/CD45 pre-mRNA in resting T-cells. Involved in cyclin-D1/CCND1 mRNA stability probably by acting as component of the SNARP complex which associates with both the 3'end of the CCND1 gene and its mRNA. Involved in response to DNA damage. Is excluced from DNA damage sites in a manner that parallels transcription inhibition; the function may involve the SNARP complex. Initially thought to play a role in transcriptional coactivation through its association with the TRAP complex; however, it is not regarded as a stable Mediator complex subunit. Cooperatively with HELZ2, enhances the transcriptional activation mediated by PPARG, maybe through the stabilization of the PPARG binding to DNA in presence of ligand. May play a role in the terminal stage of adipocyte differentiation. Plays a role in the positive regulation of the circadian clock. Acts as a coactivator of the CLOCK-BMAL1 heterodimer and promotes its transcriptional activator activity and binding to circadian target genes. The sequence is that of Thyroid hormone receptor-associated protein 3 from Homo sapiens (Human).